The chain runs to 603 residues: Variable flagella 3 (603 aa).

A coiled-coil region spans residues 169–289 (GGEVSAELRR…TEDLEARDRR (121 aa)). Positions 288–297 (RRMNSTDRIR) are enriched in basic and acidic residues. Disordered stretches follow at residues 288–526 (RRMN…PARA) and 539–564 (AGRG…SSKS). Over residues 337-348 (SRSNSRGRGTSS) the composition is skewed to low complexity. The span at 364-380 (PRFDPTEYVRQRKERES) shows a compositional bias: basic and acidic residues. Over residues 397-406 (AGTSRASSVV) the composition is skewed to polar residues. A compositionally biased stretch (gly residues) spans 486-510 (GASGGGAGGWSKFPGGGGGGVGGSG). Over residues 511–520 (QRISSNSPRS) the composition is skewed to polar residues.

Belongs to the CCDC61 family.

The protein resides in the cytoplasm. The protein localises to the cytoskeleton. It is found in the flagellum basal body. Functionally, required for normal flagella and striated fiber formation. The sequence is that of Variable flagella 3 from Chlamydomonas reinhardtii (Chlamydomonas smithii).